The chain runs to 74 residues: Conotoxin Bu4 (74 aa).

Positions 1-22 (MKLTCVVIVAVLLLTACQLIIA) are cleaved as a signal peptide. Positions 23–45 (EDSRGTQLHRALRKATKLSVSTR) are excised as a propeptide. Cystine bridges form between Cys47–Cys63, Cys54–Cys66, and Cys62–Cys73.

This sequence belongs to the conotoxin O1 superfamily. Expressed by the venom duct.

The protein resides in the secreted. The protein is Conotoxin Bu4 of Conus bullatus (Bubble cone).